A 218-amino-acid chain; its full sequence is Eukaryotic translation initiation factor 3 subunit K (218 aa).

An N-acetylalanine modification is found at Ala-2. Thr-28 is modified (phosphothreonine). A PCI domain is found at 42-204; sequence YDLEANLAVL…SIKPKNIVEK (163 aa). Ser-217 is subject to Phosphoserine.

It belongs to the eIF-3 subunit K family. As to quaternary structure, component of the eukaryotic translation initiation factor 3 (eIF-3) complex, which is composed of 13 subunits: EIF3A, EIF3B, EIF3C, EIF3D, EIF3E, EIF3F, EIF3G, EIF3H, EIF3I, EIF3J, EIF3K, EIF3L and EIF3M. The eIF-3 complex appears to include 3 stable modules: module A is composed of EIF3A, EIF3B, EIF3G and EIF3I; module B is composed of EIF3F, EIF3H, and EIF3M; and module C is composed of EIF3C, EIF3D, EIF3E, EIF3K and EIF3L. EIF3C of module C binds EIF3B of module A and EIF3H of module B, thereby linking the three modules. EIF3J is a labile subunit that binds to the eIF-3 complex via EIF3B. The eIF-3 complex interacts with RPS6KB1 under conditions of nutrient depletion. Mitogenic stimulation leads to binding and activation of a complex composed of MTOR and RPTOR, leading to phosphorylation and release of RPS6KB1 and binding of EIF4B to eIF-3. Identified in a HCV IRES-mediated translation complex, at least composed of EIF3C, IGF2BP1, RPS3 and HCV RNA-replicon. Interacts with ALKBH4, IFIT1 and IFIT2.

The protein localises to the nucleus. Its subcellular location is the cytoplasm. In terms of biological role, component of the eukaryotic translation initiation factor 3 (eIF-3) complex, which is required for several steps in the initiation of protein synthesis. The eIF-3 complex associates with the 40S ribosome and facilitates the recruitment of eIF-1, eIF-1A, eIF-2:GTP:methionyl-tRNAi and eIF-5 to form the 43S pre-initiation complex (43S PIC). The eIF-3 complex stimulates mRNA recruitment to the 43S PIC and scanning of the mRNA for AUG recognition. The eIF-3 complex is also required for disassembly and recycling of post-termination ribosomal complexes and subsequently prevents premature joining of the 40S and 60S ribosomal subunits prior to initiation. The eIF-3 complex specifically targets and initiates translation of a subset of mRNAs involved in cell proliferation, including cell cycling, differentiation and apoptosis, and uses different modes of RNA stem-loop binding to exert either translational activation or repression. The chain is Eukaryotic translation initiation factor 3 subunit K (Eif3k) from Mus musculus (Mouse).